Reading from the N-terminus, the 153-residue chain is NAD(P)H-quinone oxidoreductase subunit N (153 aa).

The protein belongs to the complex I NdhN subunit family. As to quaternary structure, NDH-1 can be composed of about 15 different subunits; different subcomplexes with different compositions have been identified which probably have different functions.

It localises to the cellular thylakoid membrane. It carries out the reaction a plastoquinone + NADH + (n+1) H(+)(in) = a plastoquinol + NAD(+) + n H(+)(out). It catalyses the reaction a plastoquinone + NADPH + (n+1) H(+)(in) = a plastoquinol + NADP(+) + n H(+)(out). In terms of biological role, NDH-1 shuttles electrons from an unknown electron donor, via FMN and iron-sulfur (Fe-S) centers, to quinones in the respiratory and/or the photosynthetic chain. The immediate electron acceptor for the enzyme in this species is believed to be plastoquinone. Couples the redox reaction to proton translocation, and thus conserves the redox energy in a proton gradient. Cyanobacterial NDH-1 also plays a role in inorganic carbon-concentration. The protein is NAD(P)H-quinone oxidoreductase subunit N of Prochlorococcus marinus (strain MIT 9211).